We begin with the raw amino-acid sequence, 338 residues long: Phosphatidylinositol:ceramide inositolphosphotransferase (338 aa).

Over 1–36 the chain is Cytoplasmic; sequence MTSHVTAHDVGGNEDIGTDHVPWYKQPLPLCTQVMR. The helical transmembrane segment at 37–57 threads the bilayer; that stretch reads FILLLLLTVMFLGVAILVANA. At 58–87 the chain is on the extracellular side; it reads RMPDPEKVRPLPDLLLESIPKVALLENGTN. A helical transmembrane segment spans residues 88 to 108; that stretch reads VIIFLLNATTVVVGFKVFLLE. The Cytoplasmic portion of the chain corresponds to 109–116; it reads RHMNGLPR. Residues 117 to 137 form a helical membrane-spanning segment; that stretch reads VTFLVGVPKIGSFLNRMAFGV. Residues 138–152 are Extracellular-facing; sequence LDSGRRPFPLKNVFP. The chain crosses the membrane as a helical span at residues 153 to 173; that stretch reads IMAIRFLTSYAVVMVFRAFVI. The Cytoplasmic segment spans residues 174-189; the sequence is MGTSYPATDNHCQNPQ. The helical transmembrane segment at 190 to 210 threads the bilayer; that stretch reads VIEHPVLNVILTLVTLGSGAI. The Extracellular segment spans residues 211-222; it reads HCGDLMFSGHTM. H220 is an active-site residue. Residues 223-243 form a helical membrane-spanning segment; sequence ILSLAFILAWDYSPFLHPWAV. Residues 244-338 lie on the Cytoplasmic side of the membrane; the sequence is RVWVSVLLPI…TDASAALPEH (95 aa). Residues H264 and D268 contribute to the active site.

This sequence belongs to the sphingomyelin synthase family.

It is found in the membrane. Functionally, bidirectional lipid inositolphosphotransferase capable of converting phosphatidylinositol (PI) and ceramide to inositol-phosphorylceramide (IPC) and diacylglycerol (DAG) and vice versa. Direction is dependent on the relative concentrations of DAG and ceramide as phosphoinositol acceptors. Essential for viability of the pathogenic bloodstream stage of this human protozoan parasite and, consequently, can be considered as potential drug target. The protein is Phosphatidylinositol:ceramide inositolphosphotransferase of Leishmania major.